Here is a 70-residue protein sequence, read N- to C-terminus: Ubiquinol-cytochrome c reductase complex assembly factor 5 (70 aa).

Residues 1-19 (MFTRAQVRRILQRVPGKQR) are Mitochondrial matrix-facing. The helical transmembrane segment at 20 to 41 (FGIYRFLPFFFVLGGTMEWIMI) threads the bilayer. Residues 42 to 70 (KVRVGQETFYDVYRRKASERQYQRRLEDE) lie on the Mitochondrial intermembrane side of the membrane.

The protein belongs to the UQCC5 family. In terms of assembly, associates with the mitochondrial ribosome. Interacts with UQCC6. Interacts with MT-CYB; interacts with newly synthesizes MT-CYB. Forms a complex, named COMB/coordinator of mitochondrial CYTB biogenesis, composed of UQCC1, UQCC2, UQCC4, UQCC5 and UQCC6; regulates MT-CYB synthesis and promotes its membrane insertion.

It is found in the mitochondrion inner membrane. In terms of biological role, required for the assembly and stability of the mitochondrial ubiquinol-cytochrome c reductase complex (complex III (CIII) or cytochrome b-c1 complex), a multisubunit transmembrane complex that is part of the mitochondrial electron transport chain (ETC) which drives oxidative phosphorylation. Mediates early complex III biogenesis. Participates in regulating the levels of electron transport chain proteins, and therefore energy supply, in response to changes in energy demand. Also involved in the first steps of cytochrome c oxidase complex (complex IV) assembly. In Homo sapiens (Human), this protein is Ubiquinol-cytochrome c reductase complex assembly factor 5.